Here is a 1186-residue protein sequence, read N- to C-terminus: MFLKRLDVIGFKSFAERISVDFVKGVTAVVGPNGSGKSNITDAIRWVLGEQSARSLRGGKMEDIIFAGSDSRKRLNLAEVTLTLDNDDHFLPIDFHEVSVTRRVYRSGESEFLINNQPCRLKDIIDLFMDSGLGKEAFSIISQGKVEEILSSKAEDRRSIFEEAAGVLKYKTRKKKAENKLFETQDNLNRVEDILHELEGQVEPLKIQASIAKDYLEKKKELEHVEIALTAYDIEELHGKWSTLKEKVQMAKEEELAESSAISAKEAKIEDTRDKIQALDESVDELQQVLLVTSEELEKLEGRKEVLKERKKNAVQNQEQLEEAIVQFQQKETVLKEELSKQEAVFETLQAEVKQLRAQVKEKQQALSLHNENVEEKIEQLKSDYFELLNSQASIRNELQLLDDQMSQSAVTLQRLADNNEKHLQERHDISARKAACETEFARIEQEIHSQVGAYRDMQTKYEQKKRQYEKNESALYQAYQYVQQARSKKDMLETMQGDFSGFYQGVKEVLKAKERLGGIRGAVLELISTEQKYETAIEIALGASAQHVVTDDEQSARKAIQYLKQNSFGRATFLPLSVIRDRQLQSRDAETAARHSSFLGVASELVTFDPAYRSVIQNLLGTVLITEDLKGANELAKLLGHRYRIVTLEGDVVNPGGSMTGGAVKKKNNSLLGRSRELEDVTKRLAEMEEKTALLEQEVKTLKHSIQDMEKKLADLRETGEGLRLKQQDVKGQLYELQVAEKNINTHLELYDQEKSALSESDEERKVRKRKLEEELSAVSEKMKQLEEDIDRLTKQKQTQSSTKESLSNELTELKIAAAKKEQACKGEEDNLARLKKELTETELALKEAKEDLSFLTSEMSSSTSGEEKLEEAAKHKLNDKTKTIELIALRRDQRIKLQHGLDTYERELKEMKRLYKQKTTLLKDEEVKLGRMEVELDNLLQYLREEYSLSFEGAKEKYQLETDPEEARKRVKLIKLAIEELGTVNLGSIDEFERVNERYKFLSEQKEDLTEAKNTLFQVIEEMDEEMTKRFNDTFVQIRSHFDQVFRSLFGGGRAELRLTDPNDLLHSGVEIIAQPPGKKLQNLNLLSGGERALTAIALLFSILKVRPVPFCVLDEVEAALDEANVFRFAQYLKKYSSDTQFIVITHRKGTMEEADVLYGVTMQESGVSKVISVKLEETKEFVQ.

ATP is bound at residue 32–39 (PNGSGKSN). Coiled coils occupy residues 167–206 (VLKYKTRKKKAENKLFETQDNLNRVEDILHELEGQVEPLK) and 259–481 (SSAI…QAYQ). An SMC hinge domain is found at 519–637 (GIRGAVLELI…EDLKGANELA (119 aa)). Coiled-coil stretches lie at residues 672–864 (LLGR…MSSS), 893–943 (RDQR…NLLQ), and 990–1029 (SIDEFERVNERYKFLSEQKEDLTEAKNTLFQVIEEMDEEM).

Belongs to the SMC family. As to quaternary structure, homodimer.

Its subcellular location is the cytoplasm. Required for chromosome condensation and partitioning. In Bacillus subtilis (strain 168), this protein is Chromosome partition protein Smc.